Here is a 775-residue protein sequence, read N- to C-terminus: Melanoma-associated antigen D1 (775 aa).

The segment at Ser37–Gln330 is disordered. The span at Ala39–Ser50 shows a compositional bias: low complexity. Polar residues-rich tracts occupy residues Pro52–Thr63, Lys84–Arg100, Gly150–Lys180, Ala223–Ser237, Asn250–Gly260, and Leu297–Gln330. 19 tandem repeats follow at residues Trp293–Ala298, Trp299–Gly304, Trp305–Ala310, Trp329–Ala334, Trp335–Ile340, Trp341–Ile346, Trp347–Ile352, Trp353–Val358, Trp359–Val364, Trp365–Ala370, Trp371–Gly376, Trp377–Ser382, Trp383–Ser388, Trp389–Asp394, Trp395–Asp400, Trp401–Asp406, Trp407–Asp412, Trp413–Asp418, and Trp419–Asp424. Residues Trp293–Pro441 form a 22 X 6 AA tandem repeats of W-[PQ]-X-P-X-X region. The segment at Thr374–Trp407 is disordered. Positions Pro375 to Asp406 are enriched in low complexity. The 20; approximate repeat unit spans residues Trp425 to Asp429. 2 consecutive repeat copies span residues Trp430–Asp435 and Trp436–Pro441. Low complexity predominate over residues Gln437–Arg452. Residues Gln437–Arg463 are disordered. The region spanning Leu468–Ala666 is the MAGE domain.

As to quaternary structure, interacts with DLX5, DLX7 and MSX2 and forms homomultimers. Interacts with UNC5A. Interacts with TRIM28 and PJA1. Interacts with NGFR/p75NTR and RORA. As to expression, ubiquitous and in the seminiferous tubules expressed in Sertoli cells but not in germ cells. Expression decreases in all tissues with increased age and is detectable only in brain cortex and lung.

The protein localises to the cytoplasm. It is found in the cell membrane. Its subcellular location is the nucleus. Involved in the apoptotic response after nerve growth factor (NGF) binding in neuronal cells. Inhibits cell cycle progression, and facilitates NGFR-mediated apoptosis. May act as a regulator of the function of DLX family members. May enhance ubiquitin ligase activity of RING-type zinc finger-containing E3 ubiquitin-protein ligases. Proposed to act through recruitment and/or stabilization of the Ubl-conjugating enzyme (E2) at the E3:substrate complex. Plays a role in the circadian rhythm regulation. May act as RORA co-regulator, modulating the expression of core clock genes such as BMAL1 and NFIL3, induced, or NR1D1, repressed. This chain is Melanoma-associated antigen D1 (Maged1), found in Rattus norvegicus (Rat).